Consider the following 521-residue polypeptide: Forkhead box protein N4 (521 aa).

The fork-head DNA-binding region spans 197 to 293 (KPIYSYSCLI…EEMHKWKRKD (97 aa)). The disordered stretch occupies residues 371 to 406 (PQAHLAPDSPAPAQTPPLHALPSLSPGPLPQPAMGR).

As to expression, mainly expressed in proliferator progenitor cells in brain and retina rather than differentiated cells. In contrast, is expressed only in postmitotic epithelial cells rather than in proliferative progenitors in the proximal airway.

The protein resides in the nucleus. In terms of biological role, transcription factor essential for neural and some non-neural tissues development, such as retina and lung respectively. Binds to an 11-bp consensus sequence containing the invariant tetranucleotide 5'-ACGC-3'. During development of the central nervous system, is required to specify the amacrine and horizontal cell fates from multipotent retinal progenitors while suppressing the alternative photoreceptor cell fates through activating DLL4-NOTCH signaling. Also acts synergistically with ASCL1/MASH1 to activate DLL4-NOTCH signaling and drive commitment of p2 progenitors to the V2b interneuron fates during spinal cord neurogenesis. In development of non-neural tissues, plays an essential role in the specification of the atrioventricular canal and is indirectly required for patterning the distal airway during lung development. The sequence is that of Forkhead box protein N4 (Foxn4) from Mus musculus (Mouse).